Reading from the N-terminus, the 231-residue chain is Probable methylthioribulose-1-phosphate dehydratase (231 aa).

C82 is a substrate binding site. The Zn(2+) site is built by H100 and H102. E123 (proton donor/acceptor) is an active-site residue. H181 serves as a coordination point for Zn(2+).

It belongs to the aldolase class II family. MtnB subfamily. It depends on Zn(2+) as a cofactor.

Its subcellular location is the cytoplasm. The enzyme catalyses 5-(methylsulfanyl)-D-ribulose 1-phosphate = 5-methylsulfanyl-2,3-dioxopentyl phosphate + H2O. It functions in the pathway amino-acid biosynthesis; L-methionine biosynthesis via salvage pathway; L-methionine from S-methyl-5-thio-alpha-D-ribose 1-phosphate: step 2/6. Functionally, catalyzes the dehydration of methylthioribulose-1-phosphate (MTRu-1-P) into 2,3-diketo-5-methylthiopentyl-1-phosphate (DK-MTP-1-P). The polypeptide is Probable methylthioribulose-1-phosphate dehydratase (Dictyostelium discoideum (Social amoeba)).